We begin with the raw amino-acid sequence, 354 residues long: Uroporphyrinogen decarboxylase (354 aa).

Substrate-binding positions include 27–31 (RQAGR), phenylalanine 46, aspartate 77, tyrosine 154, serine 209, and histidine 327.

This sequence belongs to the uroporphyrinogen decarboxylase family. As to quaternary structure, homodimer.

It localises to the cytoplasm. It catalyses the reaction uroporphyrinogen III + 4 H(+) = coproporphyrinogen III + 4 CO2. The protein operates within porphyrin-containing compound metabolism; protoporphyrin-IX biosynthesis; coproporphyrinogen-III from 5-aminolevulinate: step 4/4. In terms of biological role, catalyzes the decarboxylation of four acetate groups of uroporphyrinogen-III to yield coproporphyrinogen-III. The protein is Uroporphyrinogen decarboxylase of Pseudomonas syringae pv. tomato (strain ATCC BAA-871 / DC3000).